The following is a 624-amino-acid chain: Na(+)/H(+) antiporter NhaA (624 aa).

Positions 1-164 (MNPELPPNHL…TFFINGRRYD (164 aa)) are unknown. Positions 165-624 (GPWDVRSLSE…NAQAEEEKNP (460 aa)) are na(+)/H(+) antiporter NhaA. The next 11 membrane-spanning stretches (helical) occupy residues 199 to 219 (GIML…ALGP), 240 to 260 (LSLR…VVGL), 279 to 299 (LPIA…LILV), 319 to 339 (GWGV…AMMG), 348 to 368 (VFLT…VAIF), 371 to 391 (GELH…LALL), 407 to 427 (IVLW…GIIL), 497 to 517 (FLVL…TSVF), 521 to 541 (IPLM…GFIT), 565 to 585 (GAGA…SQAF), and 596 to 616 (IAIF…LWNA).

Belongs to the NhaA Na(+)/H(+) (TC 2.A.33) antiporter family.

It localises to the cell inner membrane. The catalysed reaction is Na(+)(in) + 2 H(+)(out) = Na(+)(out) + 2 H(+)(in). In terms of biological role, na(+)/H(+) antiporter that extrudes sodium in exchange for external protons. The protein is Na(+)/H(+) antiporter NhaA of Nitrosospira multiformis (strain ATCC 25196 / NCIMB 11849 / C 71).